Reading from the N-terminus, the 287-residue chain is Glutamate racemase (287 aa).

Residues 1-15 (MATKPQDANTTSREA) show a composition bias toward polar residues. The disordered stretch occupies residues 1–25 (MATKPQDANTTSREAITSKADSPPR). Substrate contacts are provided by residues 32-33 (DS) and 64-65 (YG). Residue Cys96 is the Proton donor/acceptor of the active site. Residue 97–98 (NT) coordinates substrate. Catalysis depends on Cys208, which acts as the Proton donor/acceptor. 209 to 210 (TH) is a binding site for substrate.

This sequence belongs to the aspartate/glutamate racemases family.

It carries out the reaction L-glutamate = D-glutamate. It functions in the pathway cell wall biogenesis; peptidoglycan biosynthesis. Functionally, provides the (R)-glutamate required for cell wall biosynthesis. This is Glutamate racemase from Yersinia pseudotuberculosis serotype O:1b (strain IP 31758).